The primary structure comprises 98 residues: Protein translation factor SUI1 homolog (98 aa).

The protein belongs to the SUI1 family.

The sequence is that of Protein translation factor SUI1 homolog from Pyrococcus furiosus (strain ATCC 43587 / DSM 3638 / JCM 8422 / Vc1).